The chain runs to 445 residues: Argininosuccinate lyase (445 aa).

The protein belongs to the lyase 1 family. Argininosuccinate lyase subfamily.

It localises to the cytoplasm. The enzyme catalyses 2-(N(omega)-L-arginino)succinate = fumarate + L-arginine. It functions in the pathway amino-acid biosynthesis; L-arginine biosynthesis; L-arginine from L-ornithine and carbamoyl phosphate: step 3/3. This is Argininosuccinate lyase from Xylella fastidiosa (strain 9a5c).